A 586-amino-acid polypeptide reads, in one-letter code: MFS-type transporter ucsD (586 aa).

Residues 1 to 56 (MSRNSGTTLEDGPLHADPTTEAPNNATVTTNVTANDENTEKEVDADAAAAAPAEAP) form a disordered region. Low complexity-rich tracts occupy residues 19–36 (TTEA…TAND) and 46–56 (DAAAAAPAEAP). N-linked (GlcNAc...) asparagine glycans are attached at residues N25 and N31. Helical transmembrane passes span 65–85 (WAIV…GTII), 101–121 (SFIW…PLMA), 131–151 (WLTL…GGAN), 164–184 (GFGG…LVPL), 192–212 (GIVQ…GGLL), 220–240 (WVFY…FFFL), 263–283 (AIFI…GAVY), and 290–310 (VIVP…YEWT). N324 carries an N-linked (GlcNAc...) asparagine glycan. A run of 6 helical transmembrane segments spans residues 330–350 (VLGV…FMPI), 368–388 (LPLF…LAKF), 393–413 (PMHL…SLLD), 420–440 (AWAC…AILL), 458–478 (VWTF…SAIF), and 532–552 (LRTV…LIWL).

The protein belongs to the major facilitator superfamily.

The protein localises to the membrane. MFS-type transporter; part of the gene cluster that mediates the biosynthesis of UCS1025A, a member of the pyrrolizidinone family that acts as a strong telomerase inhibitor and displays potent antibacterial and antitumor properties. These compounds share a hemiaminal-containing pyrrolizidinone core fused with a gamma-lactone, giving a furopyrrolizidine that is connected to a decalin fragment. The protein is MFS-type transporter ucsD of Acremonium sp.